Consider the following 710-residue polypeptide: MLSFQYPDVYRDETSVQEYHGHKICDPYSWLEDPDSEQTKAFVEAQNKITVPFLEQCPIRGLYKERMTELYDYPKYSCHFKKGKRYFYFYNTGLQNQRVLYVQDSLEGEARVFLDPNTLSDDGTVALRGYAFSEDGEYFAYGLSASGSDWVTIKFMKVDGAKELPDVLERVKFTCMAWTHDGKGMFYNSYPQQDGKSDGTETSTNLHQKLCYHVLGTDQSEDILCAEFPDEPKWMGGAELSDDGRYVLLSIWEGCDPVNRLWYCDLQQEPNGITGILKWVKLIDNFEGEYDYVTNEGTVFTFKTNRNSPNYRLINIDFTDPDESKWKVLVPEHEKDVLEWVACVRSNFLVLCYLHDVKNILQLHDLTTGALLKTFPLDVGSVVGYSGRKKDSEIFYQFTSFLSPGVIYHCDLTKEELEPMVFREVTVKGIDAADYQTIQIFYPSKDGTKIPMFIVHKKGIKLDGSHPAFLYGYGGFNISITPNYSVSRLIFVRHMGGVLAVANIRGGGEYGETWHKGGILANKQNCFDDFQCAAEYLIKEGYTSPKRLTINGGSNGGLLVAACANQRPDLFGCVIAQVGVMDMLKFHKFTIGHAWTTDYGCSDTKQHFEWLLKYSPLHNVKLPEADDIQYPSMLLLTADHDDRVVPLHSLKFIATLQYIVGRSRKQSNPLLIHVDTKAGHGAGKPTAKVIEEVSDMFAFIARCLNIEWIQ.

M1 is modified (N-acetylmethionine). K157 is subject to N6-acetyllysine. Active-site charge relay system residues include S554, D641, and H680.

Belongs to the peptidase S9A family.

The protein resides in the cytoplasm. It catalyses the reaction Hydrolysis of Pro-|-Xaa &gt;&gt; Ala-|-Xaa in oligopeptides.. In terms of biological role, cleaves peptide bonds on the C-terminal side of prolyl residues within peptides that are up to approximately 30 amino acids long. The protein is Prolyl endopeptidase (Prep) of Mus musculus (Mouse).